An 887-amino-acid polypeptide reads, in one-letter code: Alanine--tRNA ligase (887 aa).

Residues H575, H579, C677, and H681 each contribute to the Zn(2+) site.

The protein belongs to the class-II aminoacyl-tRNA synthetase family. It depends on Zn(2+) as a cofactor.

It localises to the cytoplasm. The catalysed reaction is tRNA(Ala) + L-alanine + ATP = L-alanyl-tRNA(Ala) + AMP + diphosphate. In terms of biological role, catalyzes the attachment of alanine to tRNA(Ala) in a two-step reaction: alanine is first activated by ATP to form Ala-AMP and then transferred to the acceptor end of tRNA(Ala). Also edits incorrectly charged Ser-tRNA(Ala) and Gly-tRNA(Ala) via its editing domain. The protein is Alanine--tRNA ligase of Geobacillus kaustophilus (strain HTA426).